Reading from the N-terminus, the 69-residue chain is Cold shock-like protein CspC (69 aa).

Residues 6 to 66 (GQVKWFNESK…GQKGPAAVNV (61 aa)) enclose the CSD domain.

It localises to the cytoplasm. This Shigella flexneri protein is Cold shock-like protein CspC (cspC).